Reading from the N-terminus, the 293-residue chain is ATP synthase subunit gamma, mitochondrial (293 aa).

The N-terminal 21 residues, 1-21, are a transit peptide targeting the mitochondrion; it reads MFALRTAARPAARSVGATRNY.

In terms of assembly, F-type ATP synthases have 2 components, the catalytic core F(1) and the membrane-embedded component F(0), linked together by a central stalk and a peripheral stalk. The central stalk, also called rotor shaft, is often seen as part of F(1). The peripheral stalk is seen as part of F(0). F(0) contains the membrane channel next to the rotor. F-type ATP synthases form dimers but each monomer functions independently in ATP generation. The dimer consists of 17 different polypeptides: ATP1 (subunit alpha, 3 molecules per monomer, part of F(1)), ATP2 (subunit beta, 3 copies per monomer, part of F(1)), ATP3 (subunit gamma, part of the central stalk), ATP4 (subunit b, part of the peripheral stalk), ATP5/OSCP (subunit 5/OSCP, part of the peripheral stalk), ATP6 (subunit a, part of the peripheral stalk), ATP7 (subunit d, part of the peripheral stalk), ATP8 (subunit 8, part of the peripheral stalk), OLI1 (subunit c, part of the rotor, 10 molecules per monomer), ATP14 (subunit h, part of the peripheral stalk), ATP15 (subunit epsilon, part of the central stalk), ATP16 (subunit delta, part of the central stalk), ATP17 (subunit f, part of the peripheral stalk), ATP18 (subunit i/j, part of the peripheral stalk), ATP19 (subunit k, dimer-specific, at interface between monomers), ATP20 (subunit g, at interface between monomers), TIM11 (subunit e, at interface between monomers).

The protein resides in the mitochondrion inner membrane. Its function is as follows. Mitochondrial membrane ATP synthase (F(1)F(0) ATP synthase or Complex V) produces ATP from ADP in the presence of a proton gradient across the membrane which is generated by electron transport complexes of the respiratory chain. F-type ATP synthases consist of two structural domains, F(1) - containing the extramembraneous catalytic core, and F(0) - containing the membrane proton channel, linked together by a central stalk and a peripheral stalk. During catalysis, ATP synthesis in the catalytic domain of F(1) is coupled via a rotary mechanism of the central stalk subunits to proton translocation. Part of the complex F(1) domain and the central stalk which is part of the complex rotary element. The gamma/ATP3 subunit protrudes into the catalytic domain formed of alpha/ATP1(3)beta/ATP2(3). Rotation of the central stalk against the surrounding alpha/ATP1(3)beta/ATP2(3) subunits leads to hydrolysis of ATP in three separate catalytic sites on the beta/ATP2 subunits. This chain is ATP synthase subunit gamma, mitochondrial, found in Yarrowia lipolytica (strain CLIB 122 / E 150) (Yeast).